The primary structure comprises 399 residues: Tryptophan synthase beta chain (399 aa).

An N6-(pyridoxal phosphate)lysine modification is found at K92.

This sequence belongs to the TrpB family. As to quaternary structure, tetramer of two alpha and two beta chains. Pyridoxal 5'-phosphate is required as a cofactor.

It catalyses the reaction (1S,2R)-1-C-(indol-3-yl)glycerol 3-phosphate + L-serine = D-glyceraldehyde 3-phosphate + L-tryptophan + H2O. It participates in amino-acid biosynthesis; L-tryptophan biosynthesis; L-tryptophan from chorismate: step 5/5. Its function is as follows. The beta subunit is responsible for the synthesis of L-tryptophan from indole and L-serine. The sequence is that of Tryptophan synthase beta chain from Bordetella pertussis (strain Tohama I / ATCC BAA-589 / NCTC 13251).